The following is a 259-amino-acid chain: MTLLEKTRKINAMLQNAAGKTVNFKEMADTLTDVIEANTYIVSRKGKLLGYSEALPIENDRMKQMLTERQFPEEYTQSLFNVGETSSNLEVSSQYTAFPIENSELFTKGLTTIVPIVGGGERLGTLILSRLESNFTDDDLLLAEYGGTVVGMEILHEKAEEIEEEARSRAVVQMAISSLSYSELEAIEHIFDELNGKEGLLVASKIADRVGITRSVIVNALRKLESAGVIDSRSLGMKGTFIRVLNDKFLVELEKLKNN.

Residues 1 to 155 form a GAF domain region; that stretch reads MTLLEKTRKI…GGTVVGMEIL (155 aa). The segment at residues 203–222 is a DNA-binding region (H-T-H motif); the sequence is ASKIADRVGITRSVIVNALR.

Belongs to the CodY family.

It is found in the cytoplasm. Its function is as follows. DNA-binding global transcriptional regulator which is involved in the adaptive response to starvation and acts by directly or indirectly controlling the expression of numerous genes in response to nutrient availability. During rapid exponential growth, CodY is highly active and represses genes whose products allow adaptation to nutrient depletion. The sequence is that of Global transcriptional regulator CodY from Listeria monocytogenes serotype 4b (strain CLIP80459).